The sequence spans 223 residues: Sigma non-opioid intracellular receptor 1 (223 aa).

Topologically, residues methionine 1 to tryptophan 9 are lumenal. The segment at glutamine 2–arginine 8 is targeting to endoplasmic reticulum-associated lipid droplets. The chain crosses the membrane as a helical span at residues alanine 10–leucine 30. Residues glycine 31 to proline 223 lie on the Cytoplasmic side of the membrane. Residues serine 99 to leucine 106 are important for ligand-binding. Positions valine 177–proline 223 are C-terminal hydrophobic region.

It belongs to the ERG2 family. As to quaternary structure, homotrimer. Forms a ternary complex with ANK2 and ITPR3. The complex is disrupted by agonists. Interacts with KCNA4. Interacts with KCNA2; cocaine consumption leads to increased interaction. Interacts with RNF112 in an oxidative stress-regulated manner. In terms of tissue distribution, widely expressed with higher expression in liver, colon, prostate, placenta, small intestine, heart and pancreas. Expressed in the retina by retinal pigment epithelial cells. Expressed in alpha-motor neurons.

It is found in the nucleus inner membrane. The protein localises to the nucleus outer membrane. It localises to the nucleus envelope. Its subcellular location is the cytoplasmic vesicle. The protein resides in the endoplasmic reticulum membrane. It is found in the membrane. The protein localises to the lipid droplet. It localises to the cell junction. Its subcellular location is the cell membrane. The protein resides in the cell projection. It is found in the growth cone. The protein localises to the postsynaptic density membrane. Its function is as follows. Functions in lipid transport from the endoplasmic reticulum and is involved in a wide array of cellular functions probably through regulation of the biogenesis of lipid microdomains at the plasma membrane. Involved in the regulation of different receptors it plays a role in BDNF signaling and EGF signaling. Also regulates ion channels like the potassium channel and could modulate neurotransmitter release. Plays a role in calcium signaling through modulation together with ANK2 of the ITP3R-dependent calcium efflux at the endoplasmic reticulum. Plays a role in several other cell functions including proliferation, survival and death. Originally identified for its ability to bind various psychoactive drugs it is involved in learning processes, memory and mood alteration. Necessary for proper mitochondrial axonal transport in motor neurons, in particular the retrograde movement of mitochondria. Plays a role in protecting cells against oxidative stress-induced cell death via its interaction with RNF112. This chain is Sigma non-opioid intracellular receptor 1 (SIGMAR1), found in Homo sapiens (Human).